Here is a 202-residue protein sequence, read N- to C-terminus: Transcription factor IBH1 (202 aa).

Positions 1–16 are enriched in pro residues; it reads MDAKRTPPPPTPPNPN. The segment at 1-33 is disordered; it reads MDAKRTPPPPTPPNPNPSVIGSGAAADGGGFGR. The region spanning 136–185 is the bHLH domain; the sequence is TSAAARAVPPPPRQQGEPPRAEALRRLVPGGAGMEYSSLLEETADYLRSL.

It belongs to the bHLH protein family. In terms of assembly, interacts with ILI1. Binds to ILI5/BUL1 and BC1. Interacts with BCL1 and BCL2. In terms of tissue distribution, highly expressed in roots and at lower levels in leaf blades, leaf sheaths, lamina joint, stems and panicles.

Functionally, atypical and probable non DNA-binding bHLH transcription factor that acts as a negative regulator of cell elongation and plant development. Binds the transcription factor ILI1 and forms a heterodimer of antagonistic bHLH transcription factors that function downstream of BZR1 to mediate brassinosteroid regulation of cell elongation and lamina inclination. The protein is Transcription factor IBH1 of Oryza sativa subsp. japonica (Rice).